Consider the following 509-residue polypeptide: Heat shock 70 kDa protein 14 (509 aa).

This sequence belongs to the heat shock protein 70 family. Component of ribosome-associated complex (RAC), a heterodimer composed of Hsp70/DnaK-type chaperone HSPA14 and Hsp40/DnaJ-type chaperone DNAJC2.

The protein resides in the cytoplasm. The protein localises to the cytosol. Functionally, component of the ribosome-associated complex (RAC), a complex involved in folding or maintaining nascent polypeptides in a folding-competent state. In the RAC complex, binds to the nascent polypeptide chain, while DNAJC2 stimulates its ATPase activity. The polypeptide is Heat shock 70 kDa protein 14 (HSPA14) (Macaca fascicularis (Crab-eating macaque)).